A 263-amino-acid chain; its full sequence is Non-homologous end joining protein Ku 3 (263 aa).

In terms of domain architecture, Ku spans 6 to 169 (FGLVSVPVQL…WADEVRDPHR (164 aa)).

Belongs to the prokaryotic Ku family. As to quaternary structure, homodimer. Interacts with LigD.

In terms of biological role, with LigD forms a non-homologous end joining (NHEJ) DNA repair enzyme, which repairs dsDNA breaks with reduced fidelity. Binds linear dsDNA with 5'- and 3'- overhangs but not closed circular dsDNA nor ssDNA. Recruits and stimulates the ligase activity of LigD. The sequence is that of Non-homologous end joining protein Ku 3 from Saccharopolyspora erythraea (strain ATCC 11635 / DSM 40517 / JCM 4748 / NBRC 13426 / NCIMB 8594 / NRRL 2338).